We begin with the raw amino-acid sequence, 281 residues long: Large ribosomal subunit protein mL46 (281 aa).

The transit peptide at 1 to 19 (MKVNLMLKRGLATATATAS) directs the protein to the mitochondrion. The span at 106–118 (RERSTKQEVKLSD) shows a compositional bias: basic and acidic residues. A disordered region spans residues 106–141 (RERSTKQEVKLSDDSTVAFSNNQKEQSKDDVNRPVI). Residues 119 to 129 (DSTVAFSNNQK) are compositionally biased toward polar residues.

The protein belongs to the mitochondrion-specific ribosomal protein mL46 family. In terms of assembly, component of the mitochondrial large ribosomal subunit (mt-LSU). Mature yeast 74S mitochondrial ribosomes consist of a small (37S) and a large (54S) subunit. The 37S small subunit contains a 15S ribosomal RNA (15S mt-rRNA) and 34 different proteins. The 54S large subunit contains a 21S rRNA (21S mt-rRNA) and 46 different proteins.

It is found in the mitochondrion. Functionally, component of the mitochondrial ribosome (mitoribosome), a dedicated translation machinery responsible for the synthesis of mitochondrial genome-encoded proteins, including at least some of the essential transmembrane subunits of the mitochondrial respiratory chain. The mitoribosomes are attached to the mitochondrial inner membrane and translation products are cotranslationally integrated into the membrane. The sequence is that of Large ribosomal subunit protein mL46 (MRPL17) from Saccharomyces cerevisiae (strain ATCC 204508 / S288c) (Baker's yeast).